Consider the following 61-residue polypeptide: MAELQERIRHFWKESRRAFLVTKKPNWATYKRAAKITGLGIILIGLIGMLIRIVGILILGG.

Over 1 to 34 the chain is Cytoplasmic; that stretch reads MAELQERIRHFWKESRRAFLVTKKPNWATYKRAA. A helical transmembrane segment spans residues 35–55; that stretch reads KITGLGIILIGLIGMLIRIVG. Residues 56-61 lie on the Extracellular side of the membrane; it reads ILILGG.

The protein belongs to the SecE/SEC61-gamma family. As to quaternary structure, component of the Sec protein translocase complex. Heterotrimer consisting of alpha (SecY), beta (SecG) and gamma (SecE) subunits. The heterotrimers can form oligomers, although 1 heterotrimer is thought to be able to translocate proteins. Interacts with the ribosome. May interact with SecDF, and other proteins may be involved.

The protein resides in the cell membrane. Functionally, essential subunit of the protein translocation channel SecYEG. Clamps together the 2 halves of SecY. May contact the channel plug during translocation. In Pyrococcus furiosus (strain ATCC 43587 / DSM 3638 / JCM 8422 / Vc1), this protein is Protein translocase subunit SecE.